The following is a 188-amino-acid chain: ATP-dependent Clp protease proteolytic subunit 1 (188 aa).

The active-site Nucleophile is the serine 90. Residue histidine 115 is part of the active site.

It belongs to the peptidase S14 family. In terms of assembly, fourteen ClpP subunits assemble into 2 heptameric rings which stack back to back to give a disk-like structure with a central cavity, resembling the structure of eukaryotic proteasomes.

It localises to the cytoplasm. It catalyses the reaction Hydrolysis of proteins to small peptides in the presence of ATP and magnesium. alpha-casein is the usual test substrate. In the absence of ATP, only oligopeptides shorter than five residues are hydrolyzed (such as succinyl-Leu-Tyr-|-NHMec, and Leu-Tyr-Leu-|-Tyr-Trp, in which cleavage of the -Tyr-|-Leu- and -Tyr-|-Trp bonds also occurs).. Its function is as follows. Cleaves peptides in various proteins in a process that requires ATP hydrolysis. Has a chymotrypsin-like activity. Plays a major role in the degradation of misfolded proteins. In Corynebacterium jeikeium (strain K411), this protein is ATP-dependent Clp protease proteolytic subunit 1.